A 267-amino-acid chain; its full sequence is Trehalose 2-sulfotransferase (267 aa).

Residues glutamine 14, 33–39 (EPQEFFQ), proline 48, and tryptophan 53 each bind alpha,alpha-trehalose. Residue glutamate 36 is the Proton acceptor of the active site.

This sequence belongs to the Stf0 sulfotransferase family. Homodimer.

The enzyme catalyses alpha,alpha-trehalose + 3'-phosphoadenylyl sulfate = 2-O-sulfo-alpha,alpha-trehalose + adenosine 3',5'-bisphosphate + H(+). Its pathway is glycolipid metabolism. In terms of biological role, catalyzes the sulfuryl group transfer from 3'-phosphoadenosine-5'-phosphosulfate (PAPS) to trehalose, leading to trehalose-2-sulfate (T2S). The sulfation of trehalose is the first step in the biosynthesis of sulfolipid-1 (SL-1), a major cell wall glycolipid and the most abundant sulfated metabolite found in Mycobacterium tuberculosis, that is a potential virulence factor thought to mediate host-pathogen interactions. This chain is Trehalose 2-sulfotransferase, found in Mycobacterium tuberculosis (strain ATCC 35801 / TMC 107 / Erdman).